We begin with the raw amino-acid sequence, 314 residues long: Diisopropyl-fluorophosphatase (314 aa).

Glu21, Asn120, Asn175, Asp229, Asp232, Leu273, and His274 together coordinate Ca(2+). His287 (proton acceptor) is an active-site residue.

As to quaternary structure, monomer. It depends on Ca(2+) as a cofactor.

The catalysed reaction is diisopropyl fluorophosphate + H2O = diisopropyl phosphate + fluoride + 2 H(+). Inhibited by chelating agents. Its function is as follows. Biological function and substrate unknown. However, it is capable of acting on phosphorus anhydride bonds (such as phosphorus-halide and phosphorus-cyanide) in organophosphorus compounds (including nerve gases). In Loligo vulgaris (Common European squid), this protein is Diisopropyl-fluorophosphatase.